The following is a 525-amino-acid chain: GMP synthase [glutamine-hydrolyzing] (525 aa).

A Glutamine amidotransferase type-1 domain is found at R9–L207. The active-site Nucleophile is C86. Residues H181 and E183 contribute to the active site. Positions W208–R400 constitute a GMPS ATP-PPase domain. S235–S241 lines the ATP pocket.

As to quaternary structure, homodimer.

The catalysed reaction is XMP + L-glutamine + ATP + H2O = GMP + L-glutamate + AMP + diphosphate + 2 H(+). The protein operates within purine metabolism; GMP biosynthesis; GMP from XMP (L-Gln route): step 1/1. In terms of biological role, catalyzes the synthesis of GMP from XMP. In Salmonella arizonae (strain ATCC BAA-731 / CDC346-86 / RSK2980), this protein is GMP synthase [glutamine-hydrolyzing].